Here is a 59-residue protein sequence, read N- to C-terminus: Putative potassium channel toxin Ts24 (59 aa).

The first 22 residues, 1-22, serve as a signal peptide directing secretion; the sequence is MKAFYGILIIFILISMIHLSQQ. 3 cysteine pairs are disulfide-bonded: Cys-29/Cys-50, Cys-35/Cys-55, and Cys-39/Cys-57.

Belongs to the short scorpion toxin superfamily. Potassium channel inhibitor family. Alpha-KTx 04 subfamily. Expressed by the venom gland.

The protein localises to the secreted. In terms of biological role, potently blocks Kv1.1/KCNA1 (85%), Kv1.2/KCNA2 (91%), Kv1.3/KCNA3 (89%), Kv1.6/KCNA6 (94%), and Shaker (97%). In Tityus serrulatus (Brazilian scorpion), this protein is Putative potassium channel toxin Ts24.